Consider the following 166-residue polypeptide: Small ribosomal subunit protein uS5 (166 aa).

Residues 11 to 74 (LIEKLVSVKR…ENAKKNMVSV (64 aa)) form the S5 DRBM domain.

This sequence belongs to the universal ribosomal protein uS5 family. As to quaternary structure, part of the 30S ribosomal subunit. Contacts proteins S4 and S8.

In terms of biological role, with S4 and S12 plays an important role in translational accuracy. Functionally, located at the back of the 30S subunit body where it stabilizes the conformation of the head with respect to the body. In Francisella tularensis subsp. tularensis (strain FSC 198), this protein is Small ribosomal subunit protein uS5.